The chain runs to 327 residues: Methionyl-tRNA formyltransferase (327 aa).

122–125 (SLLP) serves as a coordination point for (6S)-5,6,7,8-tetrahydrofolate.

This sequence belongs to the Fmt family.

The enzyme catalyses L-methionyl-tRNA(fMet) + (6R)-10-formyltetrahydrofolate = N-formyl-L-methionyl-tRNA(fMet) + (6S)-5,6,7,8-tetrahydrofolate + H(+). Functionally, attaches a formyl group to the free amino group of methionyl-tRNA(fMet). The formyl group appears to play a dual role in the initiator identity of N-formylmethionyl-tRNA by promoting its recognition by IF2 and preventing the misappropriation of this tRNA by the elongation apparatus. The chain is Methionyl-tRNA formyltransferase from Ralstonia pickettii (strain 12J).